A 639-amino-acid chain; its full sequence is Immunoglobulin-like domain-containing receptor 2 (639 aa).

Residues 1–20 form the signal peptide; it reads MDRVLLRWISLFWLTAMVEG. In terms of domain architecture, Ig-like V-type spans 21–162; that stretch reads LQVTVPDKKK…LEGKNEDSVE (142 aa). Residues 21–186 are Lumenal-facing; sequence LQVTVPDKKK…PSFAVEIMPE (166 aa). A disulfide bridge connects residues C42 and C145. The chain crosses the membrane as a helical span at residues 187–207; that stretch reads WVFVGLVLLGVFLFFVLVGIC. At 208 to 639 the chain is on the cytoplasmic side; the sequence is WCQCCPHSCC…DFPTRMSLVV (432 aa). Disordered stretches follow at residues 273-295, 374-415, and 437-639; these read LMDK…HSVR, WSGV…MLSR, and YGQR…SLVV. Composition is skewed to basic and acidic residues over residues 393–414 and 442–464; these read YNKE…EMLS and RRAD…ESRA. S473 carries the post-translational modification Phosphoserine. The span at 483 to 493 shows a compositional bias: basic and acidic residues; sequence RSREPLTDADR. R544 is modified (omega-N-methylarginine). Residue S579 is modified to Phosphoserine. Basic and acidic residues predominate over residues 606–617; the sequence is RGRDLPYHSNSE.

This sequence belongs to the immunoglobulin superfamily. LISCH7 family. Interacts with MARVELD2 and OCLN. Interacts with P4HB AND HSPA5; the interaction with HSPA5 stabilizes ILDR2 expression. Interacts (via C-terminus) with TRA2A, TRA2B and SRSF1. In terms of tissue distribution, expressed in testis, brain, pituitary, colon, heart, nerves, prostate, esophagus, lung liver and small intestine. Highly expressed in macrophages, also expressed in monocytes and at low levels in NK and NKT cells (at protein level).

It localises to the endoplasmic reticulum membrane. It is found in the cell junction. The protein localises to the tight junction. Its subcellular location is the nucleus. Its function is as follows. May be involved in ER stress pathways with effects on lipid homeostasis and insulin secretion. With ILDR1 and LSR, involved in the maintain of the epithelial barrier function through the recruitment of MARVELD2/tricellulin to tricellular tight junctions. Also functions as a B7-like protein family member expressed on immune cells and inflamed tissue and with T-cell inhibitory activity. In the inner ear, may regulate alternative pre-mRNA splicing via binding to TRA2A, TRA2B and SRSF1. The sequence is that of Immunoglobulin-like domain-containing receptor 2 from Homo sapiens (Human).